The sequence spans 877 residues: MAVATGLARLPVVCNQRLAELLRQVDDVDLLWLEEIHEEAARMFGSHYSDQPELMPKTPSQKNRKRRKRPSALRGESLELGRRRLSRRRTNNLKAVSSKRDSQRLQNKEDTEGLGTEAQELSSQTVSRRLTRSQVAAPADRSEVLPEHLRERVVPVVEISVCDRISAEFQFQKCASERAENHSASLPPSSDDKSPKESSAAESQPLPAASELIVPHTPEAKGAGKNKSAFKKTANVADTTVVLSEKELGLEEVDDSAQVQKHNERDDKEPSQRTTDSPETPTGSRLSRRSVRRSLMGKPSTIRRTSLAEKYSLARKRESTIRKSIARTVIKRKAPQKLSVSSSSVNGSGSEEVPEDEETVVNAGPPPVPQTPPKLDFQGLRMSLRSQTVNRNEQQQETSNNECDLSKSEKTQEPPQSARRKTSYKRAVDQRYDTQQAEDGGLSPLRKKTPSPPCPASKVVRPFKTFLHTVEKNQLLMTPSSVGRNGVIKSFIKYNTPLQHDPKEKERQKLQALRKKEEAEQLRKQKVEEEKKRRQEEAKLRREERLRKVLQARERAEQLEEERKRRIEQKLALFDEKTEKAREERLAEEKIKKRAAAKKMEEAEARRRQDEEARKQKALQQEEEERRHKELMQKKKEEEQERARKIAEQRQAEQEREKQLAAEREQERKKEQERKKEEERIQAEKQREQQEKAARLQKEVLAAKEQLQKEMEKKEKEEQLLAEMKRQEQEQKKLPEEQKAKDVAQTQHLENKENSPACNSYQMTPQYHKDPKPPKINPNNYGMDLNSDDSTDDESQPRKPIPAWASGNQLSQAVIRQYYNPPNVDALFGTIVSPKLEDIFYKSKPRYFKRTSSAVWNSPPFPGAKSVLGLPYSLKKY.

Positions 47–142 (HYSDQPELMP…SQVAAPADRS (96 aa)) are disordered. The span at 62–71 (KNRKRRKRPS) shows a compositional bias: basic residues. Basic and acidic residues predominate over residues 98-111 (SKRDSQRLQNKEDT). Polar residues predominate over residues 119-134 (QELSSQTVSRRLTRSQ). The interval 135–270 (VAAPADRSEV…KHNERDDKEP (136 aa)) is interaction with CBX5. Residues 155–159 (PVVEI) carry the PXVXL/I motif motif. 5 disordered regions span residues 178-210 (RAENHSASLPPSSDDKSPKESSAAESQPLPAAS), 248-459 (LGLE…ASKV), 498-548 (LQHD…RLRK), 572-695 (ALFD…KAAR), and 707-805 (LQKE…PAWA). Basic and acidic residues predominate over residues 261-271 (KHNERDDKEPS). Residues 272–283 (QRTTDSPETPTG) are compositionally biased toward polar residues. The segment covering 339–351 (SVSSSSVNGSGSE) has biased composition (low complexity). A compositionally biased stretch (polar residues) spans 384-403 (LRSQTVNRNEQQQETSNNEC). Composition is skewed to basic and acidic residues over residues 500–548 (HDPK…RLRK), 572–591 (ALFDEKTEKAREERLAEEKI), 598–615 (KKMEEAEARRRQDEEARK), 624–695 (EERR…KAAR), and 707–742 (LQKEMEKKEKEEQLLAEMKRQEQEQKKLPEEQKAKD). The tract at residues 503 to 715 (KEKERQKLQA…QLQKEMEKKE (213 aa)) is SAH. Residues 744–765 (AQTQHLENKENSPACNSYQMTP) show a composition bias toward polar residues. The segment at 781-823 (YGMDLNSDDSTDDESQPRKPIPAWASGNQLSQAVIRQYYNPPN) is IN box.

This sequence belongs to the INCENP family. As to quaternary structure, component of the chromosomal passenger complex (CPC) composed of at least BIRC5/survivin, CDCA8/borealin, INCENP and AURKB; in the complex binds directly to AURKB via the IN box, and forms a triple-helix bundle-based subcomplex with BIRC5 and CDCA8 via its N-terminus. The initially reported homodimerization is questioned as the SAH domain is shown to be monomeric. Interacts with CBX5.

The protein localises to the nucleus. Its subcellular location is the chromosome. It localises to the centromere. It is found in the cytoplasm. The protein resides in the cytoskeleton. The protein localises to the spindle. Its subcellular location is the midbody. It localises to the kinetochore. Functionally, component of the chromosomal passenger complex (CPC), a complex that acts as a key regulator of mitosis. The CPC complex has essential functions at the centromere in ensuring correct chromosome alignment and segregation and is required for chromatin-induced microtubule stabilization and spindle assembly. Acts as a scaffold regulating CPC localization and activity. The C-terminus associates with AURKB, the N-terminus associated with BIRC5/survivin and CDCA8/borealin tethers the CPC to the inner centromere, and the microtubule binding activity within the central SAH domain directs AURKB toward substrates near microtubules. The flexibility of the SAH domain is proposed to allow AURKB to follow substrates on dynamic microtubules while ensuring CPC docking to static chromatin. Activates AURKB. The sequence is that of Inner centromere protein (INCENP) from Gallus gallus (Chicken).